We begin with the raw amino-acid sequence, 502 residues long: Solute carrier family 2, facilitated glucose transporter member 5 (502 aa).

An N-acetylmethionine modification is found at Met1. Residues 1–17 (MEKEDQEKTGKLTLVLA) are Cytoplasmic-facing. Residues 18-38 (LATFLAAFGSSFQYGYNVAAV) form a helical membrane-spanning segment. Position 31 (Tyr31) interacts with D-fructose. Residues 39-67 (NSPSEFMQQFYNDTYYDRNKENIESFTLT) lie on the Extracellular side of the membrane. A glycan (N-linked (GlcNAc...) asparagine) is linked at Asn50. A helical membrane pass occupies residues 68–90 (LLWSLTVSMFPFGGFIGSLMVGF). The Cytoplasmic segment spans residues 91–97 (LVNNLGR). A helical transmembrane segment spans residues 98–118 (KGALLFNNIFSILPAILMGCS). At 119–125 (KIAKSFE) the chain is on the extracellular side. Residues 126–148 (IIIASRLLVGICAGISSNVVPMY) form a helical membrane-spanning segment. The Cytoplasmic portion of the chain corresponds to 149 to 160 (LGELAPKNLRGA). A helical transmembrane segment spans residues 161–181 (LGVVPQLFITVGILVAQLFGL). Gln166 contacts D-fructose. At 182-191 (RSVLASEEGW) the chain is on the extracellular side. A helical membrane pass occupies residues 192 to 212 (PILLGLTGVPAGLQLLLLPFF). Over 213–276 (PESPRYLLIQ…LFRMQSLRWQ (64 aa)) the chain is Cytoplasmic. Residues 277–297 (LISTIVLMAGQQLSGVNAIYY) traverse the membrane as a helical segment. Residues Gln287 and 295 to 297 (IYY) contribute to the D-fructose site. Residues 298–312 (YADQIYLSAGVKSND) are Extracellular-facing. A helical membrane pass occupies residues 313 to 333 (VQYVTAGTGAVNVFMTMVTVF). Topologically, residues 334–341 (VVELWGRR) are cytoplasmic. Residues 342 to 362 (NLLLIGFSTCLTACIVLTVAL) traverse the membrane as a helical segment. At 363-370 (ALQNTISW) the chain is on the extracellular side. The helical transmembrane segment at 371–393 (MPYVSIVCVIVYVIGHAVGPSPI) threads the bilayer. His386 contributes to the D-fructose binding site. Residues 394-411 (PALFITEIFLQSSRPSAY) lie on the Cytoplasmic side of the membrane. The chain crosses the membrane as a helical span at residues 412–432 (MIGGSVHWLSNFIVGLIFPFI). 418-419 (HW) contacts D-fructose. Residues 433-438 (QVGLGP) lie on the Extracellular side of the membrane. Residues 439–459 (YSFIIFAIICLLTTIYIFMVV) traverse the membrane as a helical segment. Topologically, residues 460-502 (PETKGRTFVEINQIFAKKNKVSDVYPEKEEKELNDLPPATREQ) are cytoplasmic.

This sequence belongs to the major facilitator superfamily. Sugar transporter (TC 2.A.1.1) family. Glucose transporter subfamily. In terms of tissue distribution, detected in jejunum. Detected in kidney, skeletal muscle, brain and adipose tissue (at protein level). Detected in small intestine and in kidney, and at much lower levels in brain. Detected in enterocytes in duodenum, jejunum, and ileum.

The protein resides in the apical cell membrane. It localises to the cell membrane. It is found in the sarcolemma. It carries out the reaction D-fructose(out) = D-fructose(in). With respect to regulation, fructose uptake is inhibited by mercury ions. Fructose uptake is only slightly inhibited by cytochalasin B. In terms of biological role, functions as a fructose transporter that has only low activity with other monosaccharides. Can mediate the uptake of deoxyglucose, but with low efficiency. Essential for fructose uptake in the small intestine. Plays a role in the regulation of salt uptake and blood pressure in response to dietary fructose. Required for the development of high blood pressure in response to high dietary fructose intake. This chain is Solute carrier family 2, facilitated glucose transporter member 5, found in Rattus norvegicus (Rat).